A 1286-amino-acid polypeptide reads, in one-letter code: Ankyrin-repeat and fibronectin type III domain-containing 1 (1286 aa).

2 ANK repeats span residues 274-303 and 311-340; these read QGNE…PEEL and EGLT…RESP. A Fibronectin type-III domain is found at 411–507; it reads VPANACLMVS…TTTPVCASPS (97 aa). The segment at 748–755 is highly conserved peptide sequence; sequence GLYLGYLK. A compositionally biased stretch (polar residues) spans 999-1011; it reads SSHIDCLPSTSPS. 4 disordered regions span residues 999 to 1032, 1086 to 1106, 1187 to 1207, and 1242 to 1286; these read SSHI…EEGC, KASM…DTDH, AEDP…RGLP, and AGQD…SSML. Low complexity predominate over residues 1260 to 1277; that stretch reads SSLPSSTSSEMSPDPTSP.

As to expression, expressed in both the suprachiasmatic nucleus and dorsal medial hypothalamus.

In terms of biological role, may play a role in neuronal function. This chain is Ankyrin-repeat and fibronectin type III domain-containing 1, found in Mus musculus (Mouse).